Reading from the N-terminus, the 207-residue chain is Urease accessory protein UreG (207 aa).

16-23 (GPVGSGKT) contacts GTP.

The protein belongs to the SIMIBI class G3E GTPase family. UreG subfamily. In terms of assembly, homodimer. UreD, UreF and UreG form a complex that acts as a GTP-hydrolysis-dependent molecular chaperone, activating the urease apoprotein by helping to assemble the nickel containing metallocenter of UreC. The UreE protein probably delivers the nickel.

It is found in the cytoplasm. In terms of biological role, facilitates the functional incorporation of the urease nickel metallocenter. This process requires GTP hydrolysis, probably effectuated by UreG. The protein is Urease accessory protein UreG of Shewanella halifaxensis (strain HAW-EB4).